The following is a 499-amino-acid chain: uncharacterized protein (499 aa).

Disordered stretches follow at residues 76-118 (QATA…RLSP) and 208-268 (DFET…DWAN). The span at 87–104 (DPEKQTGKSRYHPSEEIR) shows a compositional bias: basic and acidic residues. Residues 208-263 (DFETEDDESGDDDSEDTGEDEDEEEWVAILEDEDEDDDDDDDDDEDDDDSDSDESL) show a composition bias toward acidic residues. S355 bears the Phosphoserine mark. The tract at residues 478-499 (AEGQIRKLLFPKTNQSTQPKPK) is disordered. Residues 489 to 499 (KTNQSTQPKPK) show a composition bias toward polar residues.

This is an uncharacterized protein from Arabidopsis thaliana (Mouse-ear cress).